Reading from the N-terminus, the 82-residue chain is RNA-binding protein Hfq (82 aa).

Residues Asp10–Ile70 form the Sm domain.

This sequence belongs to the Hfq family. In terms of assembly, homohexamer.

Its function is as follows. RNA chaperone that binds small regulatory RNA (sRNAs) and mRNAs to facilitate mRNA translational regulation in response to envelope stress, environmental stress and changes in metabolite concentrations. Also binds with high specificity to tRNAs. The protein is RNA-binding protein Hfq of Clostridium kluyveri (strain NBRC 12016).